The primary structure comprises 171 residues: uncharacterized protein (171 aa).

The chain crosses the membrane as a helical span at residues 5–25 (FLLTIFALWVGGFGYYLYLIN).

It is found in the membrane. This is an uncharacterized protein from Rickettsia conorii (strain ATCC VR-613 / Malish 7).